A 413-amino-acid polypeptide reads, in one-letter code: Cell surface GPI-anchored protein ECM33 (413 aa).

Positions 1 to 20 (MQIKSFLLPIVAALLTSVSA) are cleaved as a signal peptide. Asn93, Asn102, Asn172, Asn209, Asn222, Asn227, Asn279, Asn290, Asn306, Asn322, and Asn382 each carry an N-linked (GlcNAc...) asparagine glycan. The interval 347-390 (YVCTHPANPSSSSKSGSSTQTGKSDSKSSDGSSSSNSSSSSKKG) is disordered. Residues 356 to 390 (SSSSKSGSSTQTGKSDSKSSDGSSSSNSSSSSKKG) show a composition bias toward low complexity. Gly390 carries GPI-anchor amidated glycine lipidation. Residues 391 to 413 (ASNVLVVPGMVLTTALGVLLALI) constitute a propeptide, removed in mature form.

Belongs to the SPS2 family.

Its subcellular location is the cell membrane. It is found in the secreted. It localises to the cell wall. Its function is as follows. Cell surface protein required for proper cell wall integrity and for the correct assembly of the mannoprotein outer layer of the cell wall. This is Cell surface GPI-anchored protein ECM33 (ECM331) from Candida albicans (strain SC5314 / ATCC MYA-2876) (Yeast).